The following is a 22-amino-acid chain: Conantokin-Oc (22 aa).

The tract at residues 1 to 22 (GEEERKAMAELEAKKAQEALKA) is disordered. Residues Glu3, Glu4, Glu10, and Glu18 each carry the 4-carboxyglutamate modification.

As to expression, expressed by the venom duct.

It localises to the secreted. Its function is as follows. Conantokins inhibit N-methyl-D-aspartate (NMDA) receptors. The protein is Conantokin-Oc of Conus ochroleucus (Perfect cone).